An 89-amino-acid chain; its full sequence is MAISQERKNEIIKEYARHEGDTGSPEVQIAVLTEDINQLNEHARTHKKDHHSYRGLMKKIGHRRNLLAYLRKTDIQRYRELIQRLGLRR.

Positions 1–21 (MAISQERKNEIIKEYARHEGD) are enriched in basic and acidic residues. A disordered region spans residues 1–24 (MAISQERKNEIIKEYARHEGDTGS).

Belongs to the universal ribosomal protein uS15 family. In terms of assembly, part of the 30S ribosomal subunit. Forms a bridge to the 50S subunit in the 70S ribosome, contacting the 23S rRNA.

Functionally, one of the primary rRNA binding proteins, it binds directly to 16S rRNA where it helps nucleate assembly of the platform of the 30S subunit by binding and bridging several RNA helices of the 16S rRNA. In terms of biological role, forms an intersubunit bridge (bridge B4) with the 23S rRNA of the 50S subunit in the ribosome. This chain is Small ribosomal subunit protein uS15, found in Enterococcus faecalis (strain ATCC 700802 / V583).